Here is a 93-residue protein sequence, read N- to C-terminus: Putative regulatory protein Cthe_1316 (93 aa).

Positions 74–93 (RLNTKEAEDVEVDDEEEIDE) are disordered. Over residues 81 to 93 (EDVEVDDEEEIDE) the composition is skewed to acidic residues.

Belongs to the RemA family.

The sequence is that of Putative regulatory protein Cthe_1316 from Acetivibrio thermocellus (strain ATCC 27405 / DSM 1237 / JCM 9322 / NBRC 103400 / NCIMB 10682 / NRRL B-4536 / VPI 7372) (Clostridium thermocellum).